The following is a 160-amino-acid chain: Photosystem II extrinsic protein V (160 aa).

A signal peptide spans 1 to 25 (MKRFILLAIATVFFFCQFQTNPVNA). Residues Cys-62, Cys-65, His-66, and His-117 each contribute to the heme c site.

This sequence belongs to the cytochrome c family. PsbV subfamily. PSII is composed of 1 copy each of membrane proteins PsbA, PsbB, PsbC, PsbD, PsbE, PsbF, PsbH, PsbI, PsbJ, PsbK, PsbL, PsbM, PsbT, PsbX, PsbY, PsbZ, Psb30/Ycf12, peripheral proteins PsbO, CyanoQ (PsbQ), PsbU, PsbV and a large number of cofactors. It forms dimeric complexes. Heme c is required as a cofactor.

The protein localises to the cellular thylakoid membrane. Functionally, one of the extrinsic, lumenal subunits of photosystem II (PSII). PSII is a light-driven water plastoquinone oxidoreductase, using light energy to abstract electrons from H(2)O, generating a proton gradient subsequently used for ATP formation. The extrinsic proteins stabilize the structure of photosystem II oxygen-evolving complex (OEC), the ion environment of oxygen evolution and protect the OEC against heat-induced inactivation. Low-potential cytochrome c that plays a role in the OEC of PSII. The protein is Photosystem II extrinsic protein V of Rippkaea orientalis (strain PCC 8801 / RF-1) (Cyanothece sp. (strain PCC 8801)).